The primary structure comprises 351 residues: Protein-glutamate methylesterase/protein-glutamine glutaminase (351 aa).

The Response regulatory domain occupies 6–123 (RVLVVDDSPT…ARPFGDLADK (118 aa)). A 4-aspartylphosphate modification is found at Asp57. In terms of domain architecture, CheB-type methylesterase spans 154–346 (YRAGRKVVAI…EEILKLTTAR (193 aa)). Active-site residues include Ser166, His192, and Asp288.

It belongs to the CheB family. Phosphorylated by CheA. Phosphorylation of the N-terminal regulatory domain activates the methylesterase activity.

Its subcellular location is the cytoplasm. It catalyses the reaction [protein]-L-glutamate 5-O-methyl ester + H2O = L-glutamyl-[protein] + methanol + H(+). The enzyme catalyses L-glutaminyl-[protein] + H2O = L-glutamyl-[protein] + NH4(+). Its function is as follows. Involved in chemotaxis. Part of a chemotaxis signal transduction system that modulates chemotaxis in response to various stimuli. Catalyzes the demethylation of specific methylglutamate residues introduced into the chemoreceptors (methyl-accepting chemotaxis proteins or MCP) by CheR. Also mediates the irreversible deamidation of specific glutamine residues to glutamic acid. The chain is Protein-glutamate methylesterase/protein-glutamine glutaminase from Agrobacterium fabrum (strain C58 / ATCC 33970) (Agrobacterium tumefaciens (strain C58)).